A 323-amino-acid chain; its full sequence is MPTITEDCIDGFQQYYSRPPERPKKKSLKQMVYDSEDNSYFGRSMDSWAKIGIFYVAFYGVLAALVAICMWAFFQTLDPRIPKWTLDRSLIGTNPGLGFRPLPPVDNVESTLIWYKGTQHENYKHWTDSLDDFLAVYKVPGLTPGRGQNIYNCDYNQPPPKGQVCDVDIKTWSPCTKENNYSYHKSAPCIFLKLNKIYGWIPEYYNRSNDLPANMPASLKTYIAEVEKTQPEKLNTIWVSCEGENPADQENIGAVNYLPIRGFPGYFYPYQNSEGYLSPLVAVHFQRPKRGIIINVECRAWARNIIHDRKERIGSVHYELLID.

Residues 1–50 (MPTITEDCIDGFQQYYSRPPERPKKKSLKQMVYDSEDNSYFGRSMDSWAK) are Cytoplasmic-facing. Residues 51 to 71 (IGIFYVAFYGVLAALVAICMW) traverse the membrane as a helical; Signal-anchor for type II membrane protein segment. The Extracellular segment spans residues 72–323 (AFFQTLDPRI…GSVHYELLID (252 aa)). Intrachain disulfides connect C153–C165 and C175–C189. 2 N-linked (GlcNAc...) asparagine glycosylation sites follow: N180 and N206. A disulfide bond links C241 and C298.

It belongs to the X(+)/potassium ATPases subunit beta family. In terms of assembly, the sodium/potassium-transporting ATPase is composed of a catalytic alpha subunit, an auxiliary non-catalytic beta subunit and an additional regulatory subunit. As to expression, in embryos, it is expressed in the neurons of the CNS and PNS, in Garland cells and posterior spiracles. In adults, it shows a nervous system specific distribution: optic lobes, brain, thoracic ganglia and axonal pathways in the leg. Both isoforms concentrate in the adult head, isoform 2.2 being predominant. Both isoforms are weakly expressed in the thorax and very poorly expressed in the abdomen.

The protein resides in the cell membrane. Its function is as follows. This is the non-catalytic component of the active enzyme, which catalyzes the hydrolysis of ATP coupled with the exchange of Na(+) and K(+) ions across the plasma membrane. The beta subunit regulates, through assembly of alpha/beta heterodimers, the number of sodium pumps transported to the plasma membrane. The polypeptide is Sodium/potassium-transporting ATPase subunit beta-2 (nrv2) (Drosophila melanogaster (Fruit fly)).